Here is a 296-residue protein sequence, read N- to C-terminus: tRNA uridine(34) hydroxylase (296 aa).

One can recognise a Rhodanese domain in the interval 132-226 (AGRPVVMLDT…YFEEVGGAHY (95 aa)). Catalysis depends on C186, which acts as the Cysteine persulfide intermediate.

Belongs to the TrhO family.

The catalysed reaction is uridine(34) in tRNA + AH2 + O2 = 5-hydroxyuridine(34) in tRNA + A + H2O. Functionally, catalyzes oxygen-dependent 5-hydroxyuridine (ho5U) modification at position 34 in tRNAs. The protein is tRNA uridine(34) hydroxylase of Burkholderia thailandensis (strain ATCC 700388 / DSM 13276 / CCUG 48851 / CIP 106301 / E264).